The chain runs to 134 residues: Profilin-1 (134 aa).

The protein belongs to the profilin family. In terms of assembly, occurs in many kinds of cells as a complex with monomeric actin in a 1:1 ratio.

The protein localises to the cytoplasm. The protein resides in the cytoskeleton. In terms of biological role, binds to actin and affects the structure of the cytoskeleton. At high concentrations, profilin prevents the polymerization of actin, whereas it enhances it at low concentrations. By binding to PIP2, it inhibits the formation of IP3 and DG. In Nicotiana tabacum (Common tobacco), this protein is Profilin-1 (PRO1).